We begin with the raw amino-acid sequence, 292 residues long: MAITAALVKELRERTGAGMMDCKKALQEVDGDMEAAIELMRKSGQAKAAKKAGRVAAEGVILVKSEGNQATLVELNCETDFVARDDSFLEFGDKVINAAFANKENDVEALKTTDIDGQTVEKTREDLVAKIGENMNVRRVQTLEAGDVVATYTHGARIGVAVALTGGDEDLARDLCMHVAASSPQFVKPEDVAAEVVEKERSIQVDIAMQSGKPKEIAEKMVEGRMRKFTGEISLTGQPFVKDPSMTVGELLKKAGADVVTFVRFEVGEGIERKEEDFASEVQAQVAAASKG.

The segment at 79 to 82 (TDFV) is involved in Mg(2+) ion dislocation from EF-Tu.

It belongs to the EF-Ts family.

The protein localises to the cytoplasm. In terms of biological role, associates with the EF-Tu.GDP complex and induces the exchange of GDP to GTP. It remains bound to the aminoacyl-tRNA.EF-Tu.GTP complex up to the GTP hydrolysis stage on the ribosome. This is Elongation factor Ts (tsf) from Idiomarina loihiensis (strain ATCC BAA-735 / DSM 15497 / L2-TR).